Reading from the N-terminus, the 314-residue chain is MIEIEKPRIETIEISEDAKFGKFVVEPLERGYGTTLGNSLRRILLSSLPGAAVKYIEIEGVLHEFSAIDNVVEDVSTIIMNIKKLALKIYSEEDKTLEIDVKDEGDVTASDITHDSDVEILNPEIKIATVSKGGHLKIRLVANKGRGYALAEQNKTSDLPIGVIPVDSLYSPVERVNYTVENTRVGQSSDFDKLTLDVWTNGSITPQESVSLAAKILTEHLNIFVGLTDEAQNAEIMIEKEEDQKEKVLEMSIEELDLSVRSYNCLKRAGINSVQELADKSEADMMKVRNLGRKSLEEVKYKLEDLGLGLRKED.

The interval 1–228 is alpha N-terminal domain (alpha-NTD); it reads MIEIEKPRIE…EHLNIFVGLT (228 aa). The alpha C-terminal domain (alpha-CTD) stretch occupies residues 245-314; it reads KEKVLEMSIE…DLGLGLRKED (70 aa).

This sequence belongs to the RNA polymerase alpha chain family. As to quaternary structure, homodimer. The RNAP catalytic core consists of 2 alpha, 1 beta, 1 beta' and 1 omega subunit. When a sigma factor is associated with the core the holoenzyme is formed, which can initiate transcription.

It catalyses the reaction RNA(n) + a ribonucleoside 5'-triphosphate = RNA(n+1) + diphosphate. In terms of biological role, DNA-dependent RNA polymerase catalyzes the transcription of DNA into RNA using the four ribonucleoside triphosphates as substrates. The sequence is that of DNA-directed RNA polymerase subunit alpha from Staphylococcus saprophyticus subsp. saprophyticus (strain ATCC 15305 / DSM 20229 / NCIMB 8711 / NCTC 7292 / S-41).